The primary structure comprises 272 residues: NAD kinase (272 aa).

The active-site Proton acceptor is Asp-62. Residues 62–63, Arg-67, 129–130, Arg-140, Lys-157, Asp-159, Ile-167, 170–175, Ala-194, and Gln-229 contribute to the NAD(+) site; these read DG, NE, and SSYSSS.

It belongs to the NAD kinase family. Requires a divalent metal cation as cofactor.

Its subcellular location is the cytoplasm. The catalysed reaction is NAD(+) + ATP = ADP + NADP(+) + H(+). Functionally, involved in the regulation of the intracellular balance of NAD and NADP, and is a key enzyme in the biosynthesis of NADP. Catalyzes specifically the phosphorylation on 2'-hydroxyl of the adenosine moiety of NAD to yield NADP. In Thermoplasma acidophilum (strain ATCC 25905 / DSM 1728 / JCM 9062 / NBRC 15155 / AMRC-C165), this protein is NAD kinase.